The sequence spans 1590 residues: von Willebrand factor D and EGF domain-containing protein (1590 aa).

The N-terminal stretch at 1–20 (MPGGACVLVIALMFLAWGEA) is a signal peptide. N367 carries an N-linked (GlcNAc...) asparagine glycan. In terms of domain architecture, VWFD spans 423–606 (AYCYTFTDPH…EWRILPGKSM (184 aa)). 2 cysteine pairs are disulfide-bonded: C425–C565 and C468–C477. N-linked (GlcNAc...) asparagine glycosylation is found at N703 and N968. The EGF-like 1 domain occupies 1177–1216 (TVKSCDCLNGGSCVSDRNFSPGSGVYLCVCLPGFHGSLCE). Cystine bridges form between C1181–C1189, C1183–C1204, and C1206–C1215. A compositionally biased stretch (basic and acidic residues) spans 1268-1280 (DKSVNKEEDDKNA). The interval 1268-1288 (DKSVNKEEDDKNAQGRKRHVK) is disordered. EGF-like domains are found at residues 1294-1326 (AFTI…SNCQ), 1358-1390 (DEEH…PRCE), 1422-1454 (STAL…EHCQ), 1455-1486 (NAFC…RRFQ), 1518-1550 (NTPI…VRCQ), and 1551-1582 (IPIC…VKCE). Intrachain disulfides connect C1298–C1308, C1302–C1314, C1316–C1325, C1362–C1372, C1366–C1378, C1380–C1389, C1426–C1436, C1430–C1442, C1444–C1453, C1458–C1468, C1462–C1474, C1522–C1532, C1526–C1538, C1540–C1549, C1554–C1564, C1558–C1570, and C1572–C1581.

It localises to the secreted. This Homo sapiens (Human) protein is von Willebrand factor D and EGF domain-containing protein (VWDE).